The primary structure comprises 63 residues: Juvenile hormone esterase, isoform B (63 aa).

N20 carries an N-linked (GlcNAc...) asparagine glycan.

The protein belongs to the type-B carboxylesterase/lipase family. As to expression, fat body, the site of their biosynthesis, and the hemolymph where it is secreted.

The catalysed reaction is juvenile hormone I + H2O = juvenile hormone I carboxylate + methanol + H(+). The enzyme catalyses juvenile hormone III + H2O = juvenile hormone III carboxylate + methanol + H(+). In terms of biological role, JH esterase plays a crucial role in the decrease of JH activity in lepidopteran insects, by hydrolyzing the methyl ester of JH. It is also involved in the transport of JH. The sequence is that of Juvenile hormone esterase, isoform B from Trichoplusia ni (Cabbage looper).